We begin with the raw amino-acid sequence, 122 residues long: Large ribosomal subunit protein uL14 (122 aa).

The protein belongs to the universal ribosomal protein uL14 family. Part of the 50S ribosomal subunit. Forms a cluster with proteins L3 and L19. In the 70S ribosome, L14 and L19 interact and together make contacts with the 16S rRNA in bridges B5 and B8.

In terms of biological role, binds to 23S rRNA. Forms part of two intersubunit bridges in the 70S ribosome. The chain is Large ribosomal subunit protein uL14 from Thermosynechococcus vestitus (strain NIES-2133 / IAM M-273 / BP-1).